Consider the following 69-residue polypeptide: Intrepicalcin (69 aa).

The first 27 residues, M1–A27, serve as a signal peptide directing secretion. A propeptide spanning residues S28–R36 is cleaved from the precursor. 3 cysteine pairs are disulfide-bonded: C39/C53, C46/C57, and C52/C68. Residues R59–R60 are essential for stimulation of [3H]ryanodine binding to RYR1.

Belongs to the scorpion calcin family. In terms of tissue distribution, expressed by the venom gland.

The protein localises to the secreted. This toxin stabilizes ryanodine receptor 1 (RyR1) opening in a long-lasting subconductance state (55% of the full conductance state). Furthermore, it triggers calcium release from sarcoplasmic vesicles (45.3 nM are enough to induce a sharp release, and 50% of the total calcium is released after toxin (100 nM) addition) probably by acting as a cell-penetrating peptide (CPP). In addition, it has been shown to dose-dependently stimulate ryanodine binding to RyR1 (EC(50)=17.4 nM). It also augments the bell-shaped calcium-[3H]ryanodine binding curve that is maximal at about 10 uM calcium concentration. It binds a different site as ryanodine. It acts synergistically with caffeine. In vivo, intracerebroventricular injection into mice induces neurotoxic symptoms, followed by death. This Thorellius intrepidus (Scorpion) protein is Intrepicalcin.